We begin with the raw amino-acid sequence, 162 residues long: Phenazine biosynthesis protein PhzA2 (162 aa).

Belongs to the PhzA/PhzB family.

It participates in antibiotic biosynthesis; phenazine biosynthesis. In terms of biological role, involved in the biosynthesis of the antibiotic phenazine, a nitrogen-containing heterocyclic molecule having important roles in virulence, competition and biological control. PhzA2 (operon phzA2B2C2E2F2G2) has a role in the biosynthesis of the phenazine during both planktonic growth and biofilm development, and in host infection during biofilm development. The polypeptide is Phenazine biosynthesis protein PhzA2 (Pseudomonas aeruginosa (strain ATCC 15692 / DSM 22644 / CIP 104116 / JCM 14847 / LMG 12228 / 1C / PRS 101 / PAO1)).